The primary structure comprises 638 residues: LIM domain kinase 2 (638 aa).

2 LIM zinc-binding domains span residues 12–63 (CRGC…CHKD) and 72–124 (CHGC…CGKC). One can recognise a PDZ domain in the interval 152–239 (LISMPATTEC…TLQLLIEHDP (88 aa)). Thr210 carries the phosphothreonine modification. Over residues 257–266 (MQSSGHTLML) the composition is skewed to polar residues. A disordered region spans residues 257-304 (MQSSGHTLMLSTLDAKENQEGTLRRRSLRRSNSISKSPGPSSPKEPLL). The span at 270–279 (DAKENQEGTL) shows a compositional bias: basic and acidic residues. Residues 286–304 (RSNSISKSPGPSSPKEPLL) are compositionally biased toward low complexity. 2 positions are modified to phosphoserine: Ser293 and Ser298. A Protein kinase domain is found at 331–608 (LIHGEVLGKG…DSFEALSLFL (278 aa)). Residues 337–345 (LGKGFFGQA) and Lys360 contribute to the ATP site. The active site involves Asp451. Thr505 is modified (phosphothreonine; by ROCK1 and CDC42BP).

This sequence belongs to the protein kinase superfamily. TKL Ser/Thr protein kinase family. In terms of assembly, binds ROCK1 and MARF1. Interacts with NISCH. Post-translationally, phosphorylated on serine and/or threonine residues by ROCK1. As to expression, found in various tissues at moderate levels, except for testis, which shows very low expression.

The protein localises to the cytoplasm. Its subcellular location is the nucleus. The protein resides in the perinuclear region. It localises to the cytoskeleton. It is found in the spindle. The protein localises to the microtubule organizing center. Its subcellular location is the centrosome. The enzyme catalyses L-seryl-[protein] + ATP = O-phospho-L-seryl-[protein] + ADP + H(+). The catalysed reaction is L-threonyl-[protein] + ATP = O-phospho-L-threonyl-[protein] + ADP + H(+). Its function is as follows. Serine/threonine-protein kinase that plays an essential role in the regulation of actin filament dynamics. Acts downstream of several Rho family GTPase signal transduction pathways. Involved in astral microtubule organization and mitotic spindle orientation during early stages of mitosis by mediating phosphorylation of TPPP. Displays serine/threonine-specific phosphorylation of myelin basic protein and histone (MBP) in vitro. Suppresses ciliogenesis via multiple pathways; phosphorylation of CFL1, directional trafficking of ciliary vesicles to the ciliary base, and by facilitating YAP1 nuclear localization where it acts as a transcriptional corepressor of the TEAD4 target genes AURKA and PLK1. This chain is LIM domain kinase 2 (Limk2), found in Rattus norvegicus (Rat).